A 443-amino-acid chain; its full sequence is Eukaryotic translation initiation factor 3 subunit M (443 aa).

The 171-residue stretch at 205-375 (GLYQSTGNLA…SLIRIHSISS (171 aa)) folds into the PCI domain. Positions 413–443 (ETVAQQGLGQQRRGGKRREEKKEKEDKEEQE) are disordered. Residues 429 to 443 (RREEKKEKEDKEEQE) show a composition bias toward basic and acidic residues.

This sequence belongs to the eIF-3 subunit M family. In terms of assembly, component of the eukaryotic translation initiation factor 3 (eIF-3) complex.

The protein resides in the cytoplasm. Functionally, component of the eukaryotic translation initiation factor 3 (eIF-3) complex, which is involved in protein synthesis of a specialized repertoire of mRNAs and, together with other initiation factors, stimulates binding of mRNA and methionyl-tRNAi to the 40S ribosome. The eIF-3 complex specifically targets and initiates translation of a subset of mRNAs involved in cell proliferation. The chain is Eukaryotic translation initiation factor 3 subunit M from Cryptococcus neoformans var. neoformans serotype D (strain B-3501A) (Filobasidiella neoformans).